A 518-amino-acid polypeptide reads, in one-letter code: ATP synthase subunit alpha (518 aa).

Residue 169–176 (GDRKTGKT) participates in ATP binding.

Belongs to the ATPase alpha/beta chains family. As to quaternary structure, F-type ATPases have 2 components, CF(1) - the catalytic core - and CF(0) - the membrane proton channel. CF(1) has five subunits: alpha(3), beta(3), gamma(1), delta(1), epsilon(1). CF(0) has three main subunits: a(1), b(2) and c(9-12). The alpha and beta chains form an alternating ring which encloses part of the gamma chain. CF(1) is attached to CF(0) by a central stalk formed by the gamma and epsilon chains, while a peripheral stalk is formed by the delta and b chains.

It is found in the cell membrane. It catalyses the reaction ATP + H2O + 4 H(+)(in) = ADP + phosphate + 5 H(+)(out). Its function is as follows. Produces ATP from ADP in the presence of a proton gradient across the membrane. The alpha chain is a regulatory subunit. This chain is ATP synthase subunit alpha, found in Enterococcus faecalis (strain ATCC 700802 / V583).